The primary structure comprises 218 residues: Small ribosomal subunit protein uS3 (218 aa).

Positions 38–106 (IREYISKRLQ…RVHINIVEIK (69 aa)) constitute a KH type-2 domain.

It belongs to the universal ribosomal protein uS3 family. As to quaternary structure, part of the 30S ribosomal subunit. Forms a tight complex with proteins S10 and S14.

Binds the lower part of the 30S subunit head. Binds mRNA in the 70S ribosome, positioning it for translation. The protein is Small ribosomal subunit protein uS3 of Geobacillus kaustophilus (strain HTA426).